We begin with the raw amino-acid sequence, 183 residues long: Mast cell-expressed membrane protein 1 (183 aa).

The tract at residues 1–26 is disordered; that stretch reads MHASASQDKNRRKPGHDEGAHNPDYE. Residues 1–70 lie on the Cytoplasmic side of the membrane; sequence MHASASQDKN…PPWLYRTIMM (70 aa). The span at 15–24 shows a compositional bias: basic and acidic residues; that stretch reads GHDEGAHNPD. A helical; Signal-anchor for type II membrane protein membrane pass occupies residues 71–91; sequence LYVLLALVFLSCIVLSALVLV. Residues 92 to 183 are Extracellular-facing; it reads KNSEMSKELW…EKKAQPQPST (92 aa). Asn-109 is a glycosylation site (N-linked (GlcNAc...) asparagine).

Its subcellular location is the membrane. This chain is Mast cell-expressed membrane protein 1, found in Mus musculus (Mouse).